The following is a 409-amino-acid chain: Cobalt-precorrin-5B C(1)-methyltransferase (409 aa).

This sequence belongs to the CbiD family.

The enzyme catalyses Co-precorrin-5B + S-adenosyl-L-methionine = Co-precorrin-6A + S-adenosyl-L-homocysteine. It functions in the pathway cofactor biosynthesis; adenosylcobalamin biosynthesis; cob(II)yrinate a,c-diamide from sirohydrochlorin (anaerobic route): step 6/10. Catalyzes the methylation of C-1 in cobalt-precorrin-5B to form cobalt-precorrin-6A. The sequence is that of Cobalt-precorrin-5B C(1)-methyltransferase from Methanopyrus kandleri (strain AV19 / DSM 6324 / JCM 9639 / NBRC 100938).